Reading from the N-terminus, the 461-residue chain is Pancreatic triacylglycerol lipase (461 aa).

Positions 1–12 (WTLSLLLGAVVG) are cleaved as a signal peptide. 2 disulfide bridges follow: Cys16–Cys22 and Cys103–Cys114. Catalysis depends on Ser165, which acts as the Nucleophile. Catalysis depends on Asp189, which acts as the Charge relay system. 4 residues coordinate Ca(2+): Glu200, Arg203, Asp205, and Asp208. Cys250 and Cys274 are oxidised to a cystine. The active-site Charge relay system is His276. 3 disulfides stabilise this stretch: Cys298–Cys309, Cys312–Cys317, and Cys445–Cys461. Positions 351–461 (WRYRVDVTLS…EDVLLTLTAC (111 aa)) constitute a PLAT domain.

Belongs to the AB hydrolase superfamily. Lipase family. Forms a 1:1 stoichiometric complex with (pro)colipase/CLPS.

It is found in the secreted. The enzyme catalyses a triacylglycerol + H2O = a diacylglycerol + a fatty acid + H(+). It carries out the reaction 1,2,3-tributanoylglycerol + H2O = dibutanoylglycerol + butanoate + H(+). It catalyses the reaction 1,2,3-tri-(9Z-octadecenoyl)-glycerol + H2O = di-(9Z)-octadecenoylglycerol + (9Z)-octadecenoate + H(+). The catalysed reaction is all-trans-retinyl hexadecanoate + H2O = all-trans-retinol + hexadecanoate + H(+). The enzyme catalyses 1,2-di-(9Z-octadecenoyl)-glycerol + H2O = (9Z-octadecenoyl)-glycerol + (9Z)-octadecenoate + H(+). Its activity is regulated as follows. Inhibited by bile salts, is reactivated by (pro)colipase/CLPS. Functionally, plays an important role in fat metabolism. It preferentially splits the esters of long-chain fatty acids at positions 1 and 3, producing mainly 2-monoacylglycerol and free fatty acids, and shows considerably higher activity against insoluble emulsified substrates than against soluble ones. The sequence is that of Pancreatic triacylglycerol lipase (PNLIP) from Equus caballus (Horse).